Here is a 160-residue protein sequence, read N- to C-terminus: 6,7-dimethyl-8-ribityllumazine synthase (160 aa).

5-amino-6-(D-ribitylamino)uracil contacts are provided by residues W27, A59–E61, and V81–I83. A (2S)-2-hydroxy-3-oxobutyl phosphate-binding site is contributed by D86–T87. H89 (proton donor) is an active-site residue. N114 is a 5-amino-6-(D-ribitylamino)uracil binding site. R128 is a binding site for (2S)-2-hydroxy-3-oxobutyl phosphate.

This sequence belongs to the DMRL synthase family. Homopentamer.

It carries out the reaction (2S)-2-hydroxy-3-oxobutyl phosphate + 5-amino-6-(D-ribitylamino)uracil = 6,7-dimethyl-8-(1-D-ribityl)lumazine + phosphate + 2 H2O + H(+). The protein operates within cofactor biosynthesis; riboflavin biosynthesis; riboflavin from 2-hydroxy-3-oxobutyl phosphate and 5-amino-6-(D-ribitylamino)uracil: step 1/2. In terms of biological role, catalyzes the formation of 6,7-dimethyl-8-ribityllumazine by condensation of 5-amino-6-(D-ribitylamino)uracil with 3,4-dihydroxy-2-butanone 4-phosphate. This is the penultimate step in the biosynthesis of riboflavin. The sequence is that of 6,7-dimethyl-8-ribityllumazine synthase from Mycobacterium leprae (strain Br4923).